The sequence spans 640 residues: Large subunit GTPase 1 homolog (640 aa).

One can recognise a CP-type G domain in the interval tryptophan 165–proline 426. Residue asparagine 213–aspartate 216 participates in GTP binding. Positions alanine 251 to asparagine 341 are disordered. 3 stretches are compositionally biased toward acidic residues: residues glutamate 253–glutamate 270, glutamate 290–aspartate 304, and glutamate 320–proline 331. A compositionally biased stretch (polar residues) spans glutamate 332–asparagine 341. Residues glycine 375 to serine 382 and aspartate 419 to glycine 422 contribute to the GTP site. The tract at residues glycine 602–alanine 640 is disordered. A compositionally biased stretch (basic residues) spans proline 618–alanine 640.

Belongs to the TRAFAC class YlqF/YawG GTPase family. LSG1 subfamily.

The protein resides in the cytoplasm. It localises to the endoplasmic reticulum. It is found in the nucleus. The protein localises to the cajal body. The catalysed reaction is GTP + H2O = GDP + phosphate + H(+). Its function is as follows. Functions as a GTPase. May act by mediating the release of NMD3 from the 60S ribosomal subunit after export into the cytoplasm during the 60S ribosomal subunit maturation. This chain is Large subunit GTPase 1 homolog, found in Danio rerio (Zebrafish).